The chain runs to 305 residues: Putative glutamine--fructose-6-phosphate aminotransferase [isomerizing] (305 aa).

Residue cysteine 2 is the Nucleophile; for GATase activity of the active site. Residues 2–305 enclose the Glutamine amidotransferase type-2 domain; it reads CGIFGYCNFL…RLCITSAVCE (304 aa).

The enzyme catalyses D-fructose 6-phosphate + L-glutamine = D-glucosamine 6-phosphate + L-glutamate. It functions in the pathway nucleotide-sugar biosynthesis; UDP-N-acetyl-alpha-D-glucosamine biosynthesis; alpha-D-glucosamine 6-phosphate from D-fructose 6-phosphate: step 1/1. Its function is as follows. Involved in amino sugar synthesis (formation of chitin, supplies the amino sugars of asparagine-linked oligosaccharides of glycoproteins). This chain is Putative glutamine--fructose-6-phosphate aminotransferase [isomerizing], found in Saccharomyces cerevisiae (strain Lalvin EC1118 / Prise de mousse) (Baker's yeast).